The following is a 405-amino-acid chain: Replication factor C large subunit (405 aa).

47 to 54 (GPPGVGKT) provides a ligand contact to ATP.

This sequence belongs to the activator 1 small subunits family. RfcL subfamily. Heteropentamer composed of four small subunits (RfcS) and one large subunit (RfcL). Probably interacts with PCNA subunit PCNA3.

Functionally, part of the RFC clamp loader complex which loads the PCNA sliding clamp onto DNA. The complex possesses DNA-dependent ATPase activity. The polypeptide is Replication factor C large subunit (rfcL) (Saccharolobus solfataricus (strain ATCC 35092 / DSM 1617 / JCM 11322 / P2) (Sulfolobus solfataricus)).